Reading from the N-terminus, the 254-residue chain is DNA repair protein RecO (254 aa).

Belongs to the RecO family.

Its function is as follows. Involved in DNA repair and RecF pathway recombination. This is DNA repair protein RecO from Anaeromyxobacter dehalogenans (strain 2CP-1 / ATCC BAA-258).